A 249-amino-acid polypeptide reads, in one-letter code: Diaminopimelate epimerase (249 aa).

2 residues coordinate substrate: asparagine 11 and asparagine 60. Cysteine 69 functions as the Proton donor in the catalytic mechanism. Residues 70-71 (GN), asparagine 164, and 182-183 (ER) contribute to the substrate site. Catalysis depends on cysteine 192, which acts as the Proton acceptor. 193–194 (GT) lines the substrate pocket.

This sequence belongs to the diaminopimelate epimerase family. Homodimer.

The protein localises to the cytoplasm. The enzyme catalyses (2S,6S)-2,6-diaminopimelate = meso-2,6-diaminopimelate. The protein operates within amino-acid biosynthesis; L-lysine biosynthesis via DAP pathway; DL-2,6-diaminopimelate from LL-2,6-diaminopimelate: step 1/1. Its function is as follows. Catalyzes the stereoinversion of LL-2,6-diaminopimelate (L,L-DAP) to meso-diaminopimelate (meso-DAP), a precursor of L-lysine and an essential component of the bacterial peptidoglycan. This is Diaminopimelate epimerase from Campylobacter jejuni subsp. jejuni serotype O:23/36 (strain 81-176).